A 136-amino-acid chain; its full sequence is Histone H3.Y (136 aa).

Over residues 1–16 the composition is skewed to low complexity; that stretch reads MARTKQTARKATAWQA. The disordered stretch occupies residues 1–43; it reads MARTKQTARKATAWQAPRKPLATKAAGKRAPPTGGIKKPHRYK. Position 3 is an asymmetric dimethylarginine (Arg-3). Position 3 is a citrulline; alternate (Arg-3). Residue Thr-4 is modified to Phosphothreonine. Lys-5 is modified (allysine; alternate). The residue at position 5 (Lys-5) is an N6,N6,N6-trimethyllysine; alternate. Position 5 is an N6,N6-dimethyllysine; alternate (Lys-5). The residue at position 5 (Lys-5) is an N6-(2-hydroxyisobutyryl)lysine; alternate. Position 5 is an N6-(beta-hydroxybutyryl)lysine; alternate (Lys-5). Lys-5 is modified (N6-acetyllysine; alternate). At Lys-5 the chain carries N6-crotonyllysine; alternate. The residue at position 5 (Lys-5) is an N6-methyllysine; alternate. 5-glutamyl dopamine; alternate is present on Gln-6. Gln-6 carries the 5-glutamyl serotonin; alternate modification. Thr-7 carries the post-translational modification Phosphothreonine. At Arg-9 the chain carries Citrulline; alternate. Arg-9 carries the post-translational modification Symmetric dimethylarginine. Lys-10 bears the N6,N6,N6-trimethyllysine; alternate mark. Lys-10 is modified (N6,N6-dimethyllysine; alternate). Position 10 is an N6-(2-hydroxyisobutyryl)lysine; alternate (Lys-10). An N6-(beta-hydroxybutyryl)lysine; alternate modification is found at Lys-10. N6-acetyllysine; alternate is present on Lys-10. N6-crotonyllysine; alternate is present on Lys-10. Lys-10 is subject to N6-methyllysine; alternate. An N6-butyryllysine; alternate modification is found at Lys-10. Residue Lys-10 is modified to N6-lactoyllysine; alternate. Residue Thr-12 is modified to Phosphothreonine. Residue Arg-18 is modified to Asymmetric dimethylarginine. At Arg-18 the chain carries Citrulline; alternate. N6-(2-hydroxyisobutyryl)lysine; alternate is present on residues Lys-19, Lys-24, Lys-28, and Lys-37. An N6-(beta-hydroxybutyryl)lysine; alternate mark is found at Lys-19, Lys-24, and Lys-28. Residues Lys-19, Lys-24, Lys-28, and Lys-37 each carry the N6-acetyllysine; alternate modification. Residues Lys-19, Lys-24, and Lys-28 each carry the N6-crotonyllysine; alternate modification. N6-methyllysine; alternate is present on residues Lys-19, Lys-24, Lys-28, and Lys-37. 2 positions are modified to N6-butyryllysine; alternate: Lys-19 and Lys-24. Lys-19, Lys-24, and Lys-28 each carry N6-lactoyllysine; alternate. Residues Lys-19, Lys-24, and Lys-28 each carry the N6-glutaryllysine; alternate modification. Residues Lys-28 and Lys-37 each carry the N6,N6,N6-trimethyllysine; alternate modification. Lys-28 and Lys-37 each carry N6,N6-dimethyllysine; alternate. Lys-38 carries the N6-methyllysine modification. The residue at position 42 (Tyr-42) is a Phosphotyrosine. Lys-57 carries the N6,N6,N6-trimethyllysine; alternate modification. Position 57 is an N6-(2-hydroxyisobutyryl)lysine; alternate (Lys-57). At Lys-57 the chain carries N6-(beta-hydroxybutyryl)lysine; alternate. The residue at position 57 (Lys-57) is an N6-acetyllysine; alternate. Position 57 is an N6-crotonyllysine; alternate (Lys-57). An N6-lactoyllysine; alternate modification is found at Lys-57. Lys-57 carries the N6-glutaryllysine; alternate modification. Lys-57 bears the N6-methyllysine mark. The residue at position 57 (Lys-57) is an N6-succinyllysine; alternate. Residue Ser-58 is modified to Phosphoserine. Lys-65 carries the N6-(2-hydroxyisobutyryl)lysine; alternate modification. The residue at position 65 (Lys-65) is an N6-methyllysine; alternate. Residue Ser-87 is modified to Phosphoserine. Thr-108 is subject to Phosphothreonine.

The protein belongs to the histone H3 family. In terms of assembly, the nucleosome is a histone octamer containing two molecules each of H2A, H2B, H3 and H4 assembled in one H3-H4 heterotetramer and two H2A-H2B heterodimers. The octamer wraps approximately 147 bp of DNA. Interacts with HIRA, a chaperone required for its incorporation into nucleosomes. Does not interact with DAXX chaperone. Post-translationally, acetylation is generally linked to gene activation. Acetylation on Lys-10 (H3K9ac) impairs methylation at Arg-9 (H3R8me2s). Acetylation on Lys-19 (H3K18ac) and Lys-24 (H3K24ac) favors methylation at Arg-18 (H3R17me). In terms of processing, citrullination at Arg-9 (H3R8ci) and/or Arg-18 (H3R17ci) impairs methylation and represses transcription. Asymmetric dimethylation at Arg-18 (H3R17me2a) is linked to gene activation. Symmetric dimethylation at Arg-9 (H3R8me2s) is linked to gene repression. Asymmetric dimethylation at Arg-3 (H3R2me2a) is linked to gene repression and is mutually exclusive with H3 Lys-5 methylation (H3K4me2 and H3K4me3). H3R2me2a is present at the 3' of genes regardless of their transcription state and is enriched on inactive promoters, while it is absent on active promoters. Post-translationally, methylation at Lys-5 (H3K4me) facilitates subsequent acetylation of H3 and H4. Methylation at Lys-10 (H3K9me) and Lys-28 (H3K27me), which are linked to gene repression, are underrepresented. Methylation at Lys-10 (H3K9me) is a specific target for HP1 proteins (CBX1, CBX3 and CBX5) and prevents subsequent acetylation of H3 and H4. In terms of processing, phosphorylation at Thr-7 (H3T6ph) is a specific tag for epigenetic transcriptional activation that prevents demethylation of Lys-5 (H3K4me) by LSD1/KDM1A. At centromeres, specifically phosphorylated at Thr-12 (H3T11ph) from prophase to early anaphase. Phosphorylation at Thr-12 (H3T11ph) is a specific tag for epigenetic transcriptional activation that promotes demethylation of Lys-10 (H3K9me). Phosphorylation at Tyr-42 (H3Y41ph) promotes exclusion of CBX5 (HP1 alpha) from chromatin. Lysine deamination at Lys-5 (H3K4all) to form allysine. Allysine formation only takes place on H3K4me3 and results in gene repression. Post-translationally, crotonylation (Kcr) is specifically present in male germ cells and marks testis-specific genes in post-meiotic cells, including X-linked genes that escape sex chromosome inactivation in haploid cells. Crotonylation marks active promoters and enhancers and confers resistance to transcriptional repressors. It is also associated with post-meiotically activated genes on autosomes. In terms of processing, butyrylation of histones marks active promoters and competes with histone acetylation. It is present during late spermatogenesis. In terms of tissue distribution, expressed at low level in some tissues, such as testis and brain.

The protein localises to the nucleus. The protein resides in the chromosome. Functionally, primate-specific variant histone H3, which constitutes a core component of nucleosomes. Histone H3.Y-containing nucleosomes accumulate around transcription start sites and have flexible DNA ends, suggesting that they form relaxed chromatin that allows transcription factor access. Histone H1 binds less efficiently to histone H3.Y-containing nucleosomes. Nucleosomes wrap and compact DNA into chromatin, limiting DNA accessibility to the cellular machineries which require DNA as a template. Histones thereby play a central role in transcription regulation, DNA repair, DNA replication and chromosomal stability. DNA accessibility is regulated via a complex set of post-translational modifications of histones, also called histone code, and nucleosome remodeling. This chain is Histone H3.Y, found in Homo sapiens (Human).